Reading from the N-terminus, the 323-residue chain is Homoserine kinase (323 aa).

97-107 (PHGRGMGSSGA) is a binding site for ATP.

This sequence belongs to the GHMP kinase family. Homoserine kinase subfamily.

It localises to the cytoplasm. The enzyme catalyses L-homoserine + ATP = O-phospho-L-homoserine + ADP + H(+). It functions in the pathway amino-acid biosynthesis; L-threonine biosynthesis; L-threonine from L-aspartate: step 4/5. Its function is as follows. Catalyzes the ATP-dependent phosphorylation of L-homoserine to L-homoserine phosphate. This is Homoserine kinase from Leifsonia xyli subsp. xyli (strain CTCB07).